The primary structure comprises 983 residues: Protein translocase subunit SecA (983 aa).

Residues glutamine 83, 101 to 105 (GEGKT), and aspartate 489 each bind ATP. The tract at residues 948–983 (ISSEEENNNEKTNININEDLERTKGEAQQTAKNPNE) is disordered. Polar residues predominate over residues 973–983 (EAQQTAKNPNE).

Belongs to the SecA family. As to quaternary structure, monomer and homodimer. Part of the essential Sec protein translocation apparatus which comprises SecA, SecYEG and auxiliary proteins SecDF. Other proteins may also be involved.

It is found in the cell membrane. The protein resides in the cytoplasm. It carries out the reaction ATP + H2O + cellular proteinSide 1 = ADP + phosphate + cellular proteinSide 2.. In terms of biological role, part of the Sec protein translocase complex. Interacts with the SecYEG preprotein conducting channel. Has a central role in coupling the hydrolysis of ATP to the transfer of proteins into and across the cell membrane, serving as an ATP-driven molecular motor driving the stepwise translocation of polypeptide chains across the membrane. The protein is Protein translocase subunit SecA of Mesomycoplasma hyopneumoniae (strain 7448) (Mycoplasma hyopneumoniae).